We begin with the raw amino-acid sequence, 305 residues long: Tyrosine recombinase XerC (305 aa).

In terms of domain architecture, Core-binding (CB) spans 2–88 (TNKQRLVHLF…ALRSFYKFLL (87 aa)). A Tyr recombinase domain is found at 109–295 (RIPSFLYEEE…SKDSLRKTYM (187 aa)). Residues Arg-149, Lys-173, His-247, Arg-250, and His-273 contribute to the active site. Tyr-282 acts as the O-(3'-phospho-DNA)-tyrosine intermediate in catalysis.

The protein belongs to the 'phage' integrase family. XerC subfamily. Forms a cyclic heterotetrameric complex composed of two molecules of XerC and two molecules of XerD.

Its subcellular location is the cytoplasm. Its function is as follows. Site-specific tyrosine recombinase, which acts by catalyzing the cutting and rejoining of the recombining DNA molecules. The XerC-XerD complex is essential to convert dimers of the bacterial chromosome into monomers to permit their segregation at cell division. It also contributes to the segregational stability of plasmids. The polypeptide is Tyrosine recombinase XerC (Bacillus pumilus (strain SAFR-032)).